A 188-amino-acid polypeptide reads, in one-letter code: Oleosin S2-2 (188 aa).

An N-acetylalanine modification is found at Ala-2. The interval 2-51 (ATVERRVQVDPTDKRIHLQPQYEGDVGYGYGYGGRADYKSSGPSSNQIVA) is polar. Transmembrane regions (helical) follow at residues 49–69 (IVALIVGVPVGGSLLALAGLT), 74–94 (VIGLMLSVPLFLLFSPVIVPA), and 96–116 (ITIGLAVTAILASGLFGLTGL). The segment at 52-125 (LIVGVPVGGS…LSSVSWVLNY (74 aa)) is hydrophobic. Residues 164–188 (DKAHEAHDTSLTTETTEPGKTRRHT) form a disordered region. A compositionally biased stretch (polar residues) spans 172-181 (TSLTTETTEP).

Belongs to the oleosin family.

It is found in the lipid droplet. It localises to the membrane. May have a structural role to stabilize the lipid body during desiccation of the seed by preventing coalescence of the oil. Probably interacts with both lipid and phospholipid moieties of lipid bodies. May also provide recognition signals for specific lipase anchorage in lipolysis during seedling growth. This Brassica napus (Rape) protein is Oleosin S2-2 (S2).